We begin with the raw amino-acid sequence, 190 residues long: Glycine cleavage system transcriptional repressor (190 aa).

ACT domains follow at residues 10–91 and 97–176; these read VITA…PRPP and WVQV…GSIN.

Its subcellular location is the cytoplasm. Its function is as follows. Negative transcriptional regulator of the glycine cleavage system operon (GCV). Does not autoregulate its own expression. It is not yet known how GcvR acts as a repressor. It does not seem to bind DNA. It could interact with GcvA and suppress its activatory activity. The polypeptide is Glycine cleavage system transcriptional repressor (gcvR) (Escherichia coli (strain K12)).